A 731-amino-acid chain; its full sequence is Actin filament-associated protein 1 (731 aa).

Met1 is subject to N-acetylmethionine. A disordered region spans residues 56-90; the sequence is NNLPAPPQMPLPEIPQPWLPPDSGPPPLPTSSLPE. A compositionally biased stretch (pro residues) spans 59–84; that stretch reads PAPPQMPLPEIPQPWLPPDSGPPPLP. An SH3-binding motif is present at residues 70-73; it reads PQPW. The SH2-binding 1 signature appears at 93–96; the sequence is YEEA. The segment at 118 to 139 is disordered; sequence SSSYESYDEEEEDGKGKKTRHQ. One can recognise a PH 1 domain in the interval 152–248; the sequence is DAKICAFLLR…WLKVIKEAYS (97 aa). The tract at residues 252–318 is disordered; it reads GPVDPECSPP…SKSEAKGTVS (67 aa). Residues 271-284 show a composition bias toward basic and acidic residues; that stretch reads AELEKKLSSERPSS. A phosphoserine mark is found at Ser283 and Ser284. One can recognise a PH 2 domain in the interval 348-442; the sequence is DVPTCGYLNV…WIGILLAETG (95 aa). The short motif at 452–457 is the SH2-binding 2 element; it reads YDYIDV. A disordered region spans residues 513–544; that stretch reads KNKKPPASSNGVPVKGKAPSSQQKKVETAGGV. At Ser549 the chain carries Phosphoserine. Residues 558-649 adopt a coiled-coil conformation; sequence KNRVEADAKR…VKESLKKALA (92 aa). Residues 595–638 are interaction with F-actin; sequence DLRAAIEVNAGRKTQAALEDKLKRLEEECKQREAERVSLELELT. The tract at residues 658 to 731 is disordered; sequence IEPRSGTSSP…AKEWELKNGT (74 aa). Residues Ser665, Ser666, and Ser669 each carry the phosphoserine modification. Thr676 carries the phosphothreonine modification. Over residues 678 to 687 the composition is skewed to polar residues; the sequence is ENSPISSCDT. Ser680 and Ser688 each carry phosphoserine. Residues 721-731 show a composition bias toward basic and acidic residues; sequence KAKEWELKNGT.

As to quaternary structure, monomer and homomultimer. Interacts via its C-terminus with F-actin; probably involving AFAP1 multimers. Interacts with activated SRC SH3-SH2 domains. Interacts via its PH 1 domain with PRKCA, PRKCB and PRKCI. Post-translationally, phosphorylated on tyrosine residues by SRC.

It localises to the cytoplasm. The protein localises to the cytoskeleton. It is found in the stress fiber. In terms of biological role, can cross-link actin filaments into both network and bundle structures. May modulate changes in actin filament integrity and induce lamellipodia formation. May function as an adapter molecule that links other proteins, such as SRC and PKC to the actin cytoskeleton. The sequence is that of Actin filament-associated protein 1 (Afap1) from Mus musculus (Mouse).